A 294-amino-acid polypeptide reads, in one-letter code: NAD kinase (294 aa).

The active-site Proton acceptor is the Asp-73. Residues 73-74, 147-148, His-158, Arg-175, Asp-177, 188-193, and Gln-249 contribute to the NAD(+) site; these read DG, NE, and TAYSLS.

This sequence belongs to the NAD kinase family. A divalent metal cation serves as cofactor.

The protein localises to the cytoplasm. It catalyses the reaction NAD(+) + ATP = ADP + NADP(+) + H(+). Its function is as follows. Involved in the regulation of the intracellular balance of NAD and NADP, and is a key enzyme in the biosynthesis of NADP. Catalyzes specifically the phosphorylation on 2'-hydroxyl of the adenosine moiety of NAD to yield NADP. The protein is NAD kinase of Aeromonas salmonicida (strain A449).